A 309-amino-acid chain; its full sequence is UDP-N-acetylenolpyruvoylglucosamine reductase (309 aa).

In terms of domain architecture, FAD-binding PCMH-type spans 33-198 (RVGGPAQVLF…TSARFRGTPA (166 aa)). The active site involves arginine 178. Serine 227 acts as the Proton donor in catalysis. Glutamate 297 is a catalytic residue.

This sequence belongs to the MurB family. Requires FAD as cofactor.

It is found in the cytoplasm. It carries out the reaction UDP-N-acetyl-alpha-D-muramate + NADP(+) = UDP-N-acetyl-3-O-(1-carboxyvinyl)-alpha-D-glucosamine + NADPH + H(+). The protein operates within cell wall biogenesis; peptidoglycan biosynthesis. Cell wall formation. This is UDP-N-acetylenolpyruvoylglucosamine reductase from Rhodopseudomonas palustris (strain HaA2).